We begin with the raw amino-acid sequence, 185 residues long: Translocon-associated protein subunit gamma (185 aa).

Met-1 carries the N-acetylmethionine modification. Residues 1–27 lie on the Lumenal side of the membrane; sequence MAPKGGPKQQSEEDLLLQDFSRNLSAK. Ser-11 carries the post-translational modification Phosphoserine. The helical transmembrane segment at 28-48 threads the bilayer; the sequence is SSALFFGNAFIVSAIPIWLYW. Over 49 to 54 the chain is Cytoplasmic; it reads RIWHMD. A helical membrane pass occupies residues 55–76; that stretch reads LIQSAVLYSVMTLVSTYLVAFA. The Lumenal segment spans residues 77–135; that stretch reads YKNVKFVLKHKVAQKREDAVSKEVTRKLSEADNRKMSRKEKDERILWKKNEVADYEATT. At Ser-105 the chain carries Phosphoserine. A helical membrane pass occupies residues 136–157; sequence FSIFYNNTLFLVLVIVASFFIL. Over 158–163 the chain is Cytoplasmic; sequence KNFNPT. Residues 164–184 form a helical membrane-spanning segment; the sequence is VNYILSISASSGLIALLSTGS.

The protein belongs to the TRAP-gamma family. In terms of assembly, heterotetramer of TRAP-alpha, TRAP-beta, TRAP-delta and TRAP-gamma.

The protein resides in the endoplasmic reticulum membrane. In terms of biological role, TRAP proteins are part of a complex whose function is to bind calcium to the ER membrane and thereby regulate the retention of ER resident proteins. The chain is Translocon-associated protein subunit gamma (SSR3) from Bos taurus (Bovine).